The following is a 247-amino-acid chain: Cytochrome c oxidase subunit 2 (247 aa).

Residues 1-38 are Mitochondrial intermembrane-facing; sequence MREMMMNNMLNDVPTPWAMYFQDSATPNMEGMMELHNN. The helical transmembrane segment at 39–55 threads the bilayer; sequence VLFYLCVMLGFVTYMLY. Topologically, residues 56–86 are mitochondrial matrix; the sequence is NVMTVYNKSAMAYKYMNHGQFMEMMWTTFPA. Residues 87–103 traverse the membrane as a helical segment; the sequence is MMLLMMAFPSFMLLYMC. Topologically, residues 104–247 are mitochondrial intermembrane; sequence DEVMAPAMTI…VDFLAWIDEQ (144 aa). Cu cation-binding residues include His-182, Cys-217, Glu-219, Cys-221, His-225, and Met-228. Glu-219 contacts Mg(2+).

The protein belongs to the cytochrome c oxidase subunit 2 family. As to quaternary structure, component of the cytochrome c oxidase (complex IV, CIV), a multisubunit enzyme composed of a catalytic core of 3 subunits and several supernumerary subunits. The complex exists as a monomer or a dimer and forms supercomplexes (SCs) in the inner mitochondrial membrane with ubiquinol-cytochrome c oxidoreductase (cytochrome b-c1 complex, complex III, CIII). Cu cation serves as cofactor.

Its subcellular location is the mitochondrion inner membrane. It catalyses the reaction 4 Fe(II)-[cytochrome c] + O2 + 8 H(+)(in) = 4 Fe(III)-[cytochrome c] + 2 H2O + 4 H(+)(out). Its function is as follows. Component of the cytochrome c oxidase, the last enzyme in the mitochondrial electron transport chain which drives oxidative phosphorylation. The respiratory chain contains 3 multisubunit complexes succinate dehydrogenase (complex II, CII), ubiquinol-cytochrome c oxidoreductase (cytochrome b-c1 complex, complex III, CIII) and cytochrome c oxidase (complex IV, CIV), that cooperate to transfer electrons derived from NADH and succinate to molecular oxygen, creating an electrochemical gradient over the inner membrane that drives transmembrane transport and the ATP synthase. Cytochrome c oxidase is the component of the respiratory chain that catalyzes the reduction of oxygen to water. Electrons originating from reduced cytochrome c in the intermembrane space (IMS) are transferred via the dinuclear copper A center (CU(A)) of subunit 2 and heme A of subunit 1 to the active site in subunit 1, a binuclear center (BNC) formed by heme A3 and copper B (CU(B)). The BNC reduces molecular oxygen to 2 water molecules using 4 electrons from cytochrome c in the IMS and 4 protons from the mitochondrial matrix. This is Cytochrome c oxidase subunit 2 (COX2) from Eeniella nana (Yeast).